Reading from the N-terminus, the 98-residue chain is Aspartyl/glutamyl-tRNA(Asn/Gln) amidotransferase subunit C (98 aa).

This sequence belongs to the GatC family. Heterotrimer of A, B and C subunits.

The enzyme catalyses L-glutamyl-tRNA(Gln) + L-glutamine + ATP + H2O = L-glutaminyl-tRNA(Gln) + L-glutamate + ADP + phosphate + H(+). It carries out the reaction L-aspartyl-tRNA(Asn) + L-glutamine + ATP + H2O = L-asparaginyl-tRNA(Asn) + L-glutamate + ADP + phosphate + 2 H(+). Its function is as follows. Allows the formation of correctly charged Asn-tRNA(Asn) or Gln-tRNA(Gln) through the transamidation of misacylated Asp-tRNA(Asn) or Glu-tRNA(Gln) in organisms which lack either or both of asparaginyl-tRNA or glutaminyl-tRNA synthetases. The reaction takes place in the presence of glutamine and ATP through an activated phospho-Asp-tRNA(Asn) or phospho-Glu-tRNA(Gln). This Mycobacterium avium (strain 104) protein is Aspartyl/glutamyl-tRNA(Asn/Gln) amidotransferase subunit C.